The primary structure comprises 20 residues: Cruzioseptin-15 (20 aa).

In terms of tissue distribution, expressed by the skin glands.

The protein localises to the secreted. In terms of biological role, has antimicrobial activity. The sequence is that of Cruzioseptin-15 from Cruziohyla calcarifer (Splendid leaf frog).